The primary structure comprises 84 residues: Kappa-conotoxin-like Im11.3 (84 aa).

A signal peptide spans 1–26; it reads MMFRLTSVSCFLLVIACLNLFQVVLT. 4 cysteine pairs are disulfide-bonded: Cys-29/Cys-43, Cys-36/Cys-48, Cys-42/Cys-51, and Cys-47/Cys-64. Residues 71-84 constitute a propeptide that is removed on maturation; the sequence is LRPSHPLFLLLPAR.

This sequence belongs to the conotoxin I2 superfamily. In terms of tissue distribution, expressed by the venom duct.

The protein localises to the secreted. Its function is as follows. Inhibits the vertebrate voltage-gated potassium channels Kv1.1/KCNA1 and Kv1.3/KCNA3. In Conus imperialis (Imperial cone), this protein is Kappa-conotoxin-like Im11.3.